Reading from the N-terminus, the 339-residue chain is Ketol-acid reductoisomerase (NADP(+)) (339 aa).

Residues 1–182 enclose the KARI N-terminal Rossmann domain; sequence MRVYYDRDAD…GGGRSGIIET (182 aa). NADP(+) contacts are provided by residues 24–27, arginine 48, serine 51, serine 53, and 83–86; these read YGSQ and DELQ. The active site involves histidine 108. Glycine 134 is a binding site for NADP(+). The region spanning 183–328 is the KARI C-terminal knotted domain; sequence TFREECETDL…EKLRAMMPWI (146 aa). Mg(2+)-binding residues include aspartate 191, glutamate 195, glutamate 227, and glutamate 231. A substrate-binding site is contributed by serine 252.

Belongs to the ketol-acid reductoisomerase family. Requires Mg(2+) as cofactor.

It catalyses the reaction (2R)-2,3-dihydroxy-3-methylbutanoate + NADP(+) = (2S)-2-acetolactate + NADPH + H(+). The catalysed reaction is (2R,3R)-2,3-dihydroxy-3-methylpentanoate + NADP(+) = (S)-2-ethyl-2-hydroxy-3-oxobutanoate + NADPH + H(+). The protein operates within amino-acid biosynthesis; L-isoleucine biosynthesis; L-isoleucine from 2-oxobutanoate: step 2/4. Its pathway is amino-acid biosynthesis; L-valine biosynthesis; L-valine from pyruvate: step 2/4. In terms of biological role, involved in the biosynthesis of branched-chain amino acids (BCAA). Catalyzes an alkyl-migration followed by a ketol-acid reduction of (S)-2-acetolactate (S2AL) to yield (R)-2,3-dihydroxy-isovalerate. In the isomerase reaction, S2AL is rearranged via a Mg-dependent methyl migration to produce 3-hydroxy-3-methyl-2-ketobutyrate (HMKB). In the reductase reaction, this 2-ketoacid undergoes a metal-dependent reduction by NADPH to yield (R)-2,3-dihydroxy-isovalerate. The protein is Ketol-acid reductoisomerase (NADP(+)) of Chelativorans sp. (strain BNC1).